The chain runs to 321 residues: ATP-dependent 6-phosphofructokinase (321 aa).

Gly-10 is an ATP binding site. Residue 20–24 (RAVVR) participates in ADP binding. Residues 71–72 (RD) and 101–104 (GEGT) contribute to the ATP site. Position 102 (Glu-102) interacts with Mg(2+). Position 125–127 (125–127 (TID)) interacts with substrate. The active-site Proton acceptor is the Asp-127. Residue Arg-154 participates in ADP binding. Substrate contacts are provided by residues Arg-162 and 169–171 (MGR). Residues 185 to 187 (GAE) and 213 to 215 (KLH) contribute to the ADP site. Residues Glu-222, Arg-246, and 252 to 255 (HIQR) each bind substrate.

Belongs to the phosphofructokinase type A (PFKA) family. ATP-dependent PFK group I subfamily. Prokaryotic clade 'B1' sub-subfamily. Homotetramer. Mg(2+) is required as a cofactor.

The protein resides in the cytoplasm. The enzyme catalyses beta-D-fructose 6-phosphate + ATP = beta-D-fructose 1,6-bisphosphate + ADP + H(+). It functions in the pathway carbohydrate degradation; glycolysis; D-glyceraldehyde 3-phosphate and glycerone phosphate from D-glucose: step 3/4. Allosterically activated by ADP and other diphosphonucleosides, and allosterically inhibited by phosphoenolpyruvate. Catalyzes the phosphorylation of D-fructose 6-phosphate to fructose 1,6-bisphosphate by ATP, the first committing step of glycolysis. In Aquifex aeolicus (strain VF5), this protein is ATP-dependent 6-phosphofructokinase.